We begin with the raw amino-acid sequence, 246 residues long: Probable transcriptional regulatory protein APJL_1171 (246 aa).

This sequence belongs to the TACO1 family.

It localises to the cytoplasm. The protein is Probable transcriptional regulatory protein APJL_1171 of Actinobacillus pleuropneumoniae serotype 3 (strain JL03).